The sequence spans 698 residues: Probable metal-nicotianamine transporter YSL17 (698 aa).

Residues 1–36 are disordered; sequence MAEEARGGQRVVVDDDREDASSVASSTERAFEGEPL. Transmembrane regions (helical) follow at residues 43-63, 67-87, 114-134, 157-177, 216-236, 277-297, 322-342, 395-415, 424-444, 463-483, 511-531, 567-587, 607-627, and 644-664; these read VTAR…VVAM, LTSG…FFLA, IAVV…YILG, IGRV…IIVP, VVTL…QWFF, MITA…WPYI, VFVG…SALV, WVAV…VPLL, VAAA…GVGV, SWVG…GIIV, VGQV…FWVF, LPDH…ALSA, IGVA…AVGC, and LLLP…SLAS.

It belongs to the YSL (TC 2.A.67.2) family. As to expression, expressed at low levels in roots.

It localises to the membrane. May be involved in the transport of nicotianamine-chelated metals. The chain is Probable metal-nicotianamine transporter YSL17 (YSL17) from Oryza sativa subsp. japonica (Rice).